We begin with the raw amino-acid sequence, 160 residues long: Peptide deformylase 1 (160 aa).

Residues cysteine 90 and histidine 132 each contribute to the Fe cation site. The active site involves glutamate 133. Histidine 136 is a binding site for Fe cation.

The protein belongs to the polypeptide deformylase family. Requires Fe(2+) as cofactor.

The enzyme catalyses N-terminal N-formyl-L-methionyl-[peptide] + H2O = N-terminal L-methionyl-[peptide] + formate. Functionally, removes the formyl group from the N-terminal Met of newly synthesized proteins. Requires at least a dipeptide for an efficient rate of reaction. N-terminal L-methionine is a prerequisite for activity but the enzyme has broad specificity at other positions. The protein is Peptide deformylase 1 (defA) of Bacillus subtilis (strain 168).